The chain runs to 1001 residues: TonB-dependent receptor P3 (1001 aa).

The N-terminal stretch at 1-26 (MTTKNNKQLKSVLFMFLLLIGAYVKA) is a signal peptide. The TonB box signature appears at 109-116 (EEIVVIGY). One can recognise a TBDR plug domain in the interval 120-232 (KKSDVSGSVS…ANGVIMVTTK (113 aa)). Residues 238 to 1001 (KPTLELNTSY…TFTMGLNMKF (764 aa)) form the TBDR beta-barrel domain. Positions 984–1001 (YGSYPNVRTFTMGLNMKF) match the TonB C-terminal box motif.

The protein belongs to the TonB-dependent receptor family.

It localises to the cell outer membrane. TonB-dependent receptor probably involved in ulvan degradation. Ulvan is the main polysaccharide component of the Ulvales (green seaweed) cell wall. It is composed of disaccharide building blocks comprising 3-sulfated rhamnose (Rha3S) linked to D-glucuronic acid (GlcA), L-iduronic acid (IduA), or D-xylose (Xyl). The TonB-dependent receptor may mediate transport of ulvan oligosaccharides from the surface of the outer membrane to the periplasm for subsequent degradation. This Formosa agariphila (strain DSM 15362 / KCTC 12365 / LMG 23005 / KMM 3901 / M-2Alg 35-1) protein is TonB-dependent receptor P3.